A 332-amino-acid polypeptide reads, in one-letter code: tRNA-dihydrouridine(20/20a) synthase (332 aa).

FMN-binding positions include 22 to 24 (PMM) and Gln-75. Catalysis depends on Cys-105, which acts as the Proton donor. FMN is bound by residues Lys-144, His-177, 217–219 (NGG), and 239–240 (GR).

Belongs to the Dus family. DusA subfamily. FMN serves as cofactor.

The catalysed reaction is 5,6-dihydrouridine(20) in tRNA + NADP(+) = uridine(20) in tRNA + NADPH + H(+). It catalyses the reaction 5,6-dihydrouridine(20) in tRNA + NAD(+) = uridine(20) in tRNA + NADH + H(+). The enzyme catalyses 5,6-dihydrouridine(20a) in tRNA + NADP(+) = uridine(20a) in tRNA + NADPH + H(+). It carries out the reaction 5,6-dihydrouridine(20a) in tRNA + NAD(+) = uridine(20a) in tRNA + NADH + H(+). Catalyzes the synthesis of 5,6-dihydrouridine (D), a modified base found in the D-loop of most tRNAs, via the reduction of the C5-C6 double bond in target uridines. Specifically modifies U20 and U20a in tRNAs. The polypeptide is tRNA-dihydrouridine(20/20a) synthase (Xylella fastidiosa (strain Temecula1 / ATCC 700964)).